A 701-amino-acid chain; its full sequence is MIDKYQEPKHHQLRIGLVSPQQIMAWANKTLPTGEIVGEVKNYRTFSYDRDSETYKPERDGLFCERIFGPIKSGVCACGESRKIGDEKEKRTFCEKCGVEFVDSRIRRYQMGYIKLASPMAHVWYLKRIPSYIANLLDEKIKDLENLVYRDFIFAGPLTKKPTLLRLRGSFPESKTKFSGSRDILSQFLKTKSFQKLRDREFSAGAGAIRKRLANLDLEVIIYSSLAEWKKRKEQKAEIEIKPTRTERTEEEDRKIEKIKRRMRVLVRRMELAKHFLETNVKPEWMILRLLPVLPPELRPIFKISEVQFISSDLNTLYKEVISNNKILSDSLLGCKFVPEQLLTGQEKIVQVAVDQLLDNRISGQPRRDRNKQLYKSFSDILAGKEGRFRQTLLGRRVDYSGRSVIVVGPSLALHQCGLPREIALELFQTFIIRSLIRQRLASSVKTAKKQIREQERIVWDILEEVVQEHPVLLNRAPTLHRLGIQAFQPILTKERAIYLHPLVCKGFNADFDGDQMAVHLPLSLEAQAEAYLLMFSTQNLLSPGNGDPICVPTQDMLTGLYTLTLGNRRGICATRYNLWNRRNSQNERIDDKHYGSTKGKELLFCNPDDAIGAYRQKRINLDSPFWLKVTWGQHRIVSKELPVEVHYESLGTHHEIYGHCKIVRSVKTERHFIYIRTTVGHLFLDREIEDALKDFRARVV.

The Zn(2+) site is built by C76, C78, C94, and C97. The Mg(2+) site is built by D511, D513, and D515.

It belongs to the RNA polymerase beta' chain family. RpoC1 subfamily. In plastids the minimal PEP RNA polymerase catalytic core is composed of four subunits: alpha, beta, beta', and beta''. When a (nuclear-encoded) sigma factor is associated with the core the holoenzyme is formed, which can initiate transcription. The cofactor is Mg(2+). Zn(2+) serves as cofactor.

The protein localises to the plastid. The protein resides in the chloroplast. It carries out the reaction RNA(n) + a ribonucleoside 5'-triphosphate = RNA(n+1) + diphosphate. Functionally, DNA-dependent RNA polymerase catalyzes the transcription of DNA into RNA using the four ribonucleoside triphosphates as substrates. This is DNA-directed RNA polymerase subunit beta' from Pelargonium hortorum (Common geranium).